A 989-amino-acid chain; its full sequence is Mediator of RNA polymerase II transcription subunit 24 (989 aa).

6 consecutive short sequence motifs (LXXLL motif) follow at residues 128-132 (LHWLL), 344-348 (LTPLL), 448-452 (LDLLL), 557-561 (LVALL), 788-792 (LPGLL), and 857-861 (LMRLL). Residues serine 862 and serine 873 each carry the phosphoserine modification.

It belongs to the Mediator complex subunit 24 family. As to quaternary structure, component of the Mediator complex, which is composed of MED1, MED4, MED6, MED7, MED8, MED9, MED10, MED11, MED12, MED13, MED13L, MED14, MED15, MED16, MED17, MED18, MED19, MED20, MED21, MED22, MED23, MED24, MED25, MED26, MED27, MED29, MED30, MED31, CCNC, CDK8 and CDC2L6/CDK11. The MED12, MED13, CCNC and CDK8 subunits form a distinct module termed the CDK8 module. Mediator containing the CDK8 module is less active than Mediator lacking this module in supporting transcriptional activation. Individual preparations of the Mediator complex lacking one or more distinct subunits have been variously termed ARC, CRSP, DRIP, PC2, SMCC and TRAP. Interacts with AR. Ubiquitous. Abundant in skeletal muscle, heart and placenta.

Its subcellular location is the nucleus. Its function is as follows. Component of the Mediator complex, a coactivator involved in the regulated transcription of nearly all RNA polymerase II-dependent genes. Mediator functions as a bridge to convey information from gene-specific regulatory proteins to the basal RNA polymerase II transcription machinery. Mediator is recruited to promoters by direct interactions with regulatory proteins and serves as a scaffold for the assembly of a functional preinitiation complex with RNA polymerase II and the general transcription factors. The polypeptide is Mediator of RNA polymerase II transcription subunit 24 (MED24) (Homo sapiens (Human)).